Consider the following 299-residue polypeptide: Bifunctional methyltransferase-like/endonuclease (299 aa).

Positions 1-80 (MLSSKLLDIN…NLIVSPMQKA (80 aa)) are probable methylated-DNA--protein-cysteine methyltransferase-like. The tract at residues 81 to 299 (LLEKEVKIIG…GRGDSNPGRD (219 aa)) is endonuclease V. Mg(2+) contacts are provided by aspartate 135 and asparagine 197.

This sequence in the N-terminal section; belongs to the MGMT family. The protein in the C-terminal section; belongs to the endonuclease V family. Mg(2+) serves as cofactor.

The protein localises to the cytoplasm. The catalysed reaction is Endonucleolytic cleavage at apurinic or apyrimidinic sites to products with a 5'-phosphate.. In terms of biological role, DNA repair enzyme involved in the repair of deaminated bases. Selectively cleaves double-stranded DNA at the second phosphodiester bond 3' to a deoxyinosine leaving behind the intact lesion on the nicked DNA. The sequence is that of Bifunctional methyltransferase-like/endonuclease from Nanoarchaeum equitans (strain Kin4-M).